A 500-amino-acid polypeptide reads, in one-letter code: MTIFDNYEVWFVIGSQHLYGPETLRQVTQHAEHVVNALNTEAKLPCKLVLKPLGTTPDEITAICRDANYDDRCAGLVVWLHTFSPAKMWINGLTMLNKPLLQFHTQFNAALPWDSIDMDFMNLNQTAHGGREFGFIGARMRQQHAVVTGHWQDKQAHERIGSWMRQAVSKQDTRHLKVCRFGDNMREVAVTDGDKVAAQIKFGFSINTWAVGDLVQVVNSISDGDVNALVDEYESCYTMTPATQIHGEKRQNVLEAARIELGMKRFLEQGGFHAFTTTFEDLHGLKQLPGLAVQRLMQQGYGFAGEGDWKTAALLRIMKVMSTGLQGGTSFMEDYTYHFEKGNDLVLGSHMLEVCPSIAAEEKPILDVQHLGIGGKDDPARLIFNTQTGPAIVASLIDLGDRYRLLVNCIDTVKTPHSLPKLPVANALWKAQPDLPTASEAWILAGGAHHTVFSHALNLNDMRQFAEMHDIEITVIDNDTRLPAFKDALRWNEVYYGFRR.

Mn(2+) contacts are provided by Glu-306, Glu-333, His-350, and His-450.

It belongs to the arabinose isomerase family. Homohexamer. Mn(2+) serves as cofactor.

The enzyme catalyses beta-L-arabinopyranose = L-ribulose. It functions in the pathway carbohydrate degradation; L-arabinose degradation via L-ribulose; D-xylulose 5-phosphate from L-arabinose (bacterial route): step 1/3. Catalyzes the conversion of L-arabinose to L-ribulose. The polypeptide is L-arabinose isomerase (Escherichia coli O17:K52:H18 (strain UMN026 / ExPEC)).